The primary structure comprises 631 residues: 1-deoxy-D-xylulose-5-phosphate synthase (631 aa).

Thiamine diphosphate is bound by residues histidine 87 and 128–130; that span reads GHS. Aspartate 159 contributes to the Mg(2+) binding site. Thiamine diphosphate-binding positions include 160–161, asparagine 188, phenylalanine 295, and glutamate 377; that span reads GA. Asparagine 188 is a Mg(2+) binding site.

It belongs to the transketolase family. DXPS subfamily. Homodimer. Requires Mg(2+) as cofactor. It depends on thiamine diphosphate as a cofactor.

The enzyme catalyses D-glyceraldehyde 3-phosphate + pyruvate + H(+) = 1-deoxy-D-xylulose 5-phosphate + CO2. It functions in the pathway metabolic intermediate biosynthesis; 1-deoxy-D-xylulose 5-phosphate biosynthesis; 1-deoxy-D-xylulose 5-phosphate from D-glyceraldehyde 3-phosphate and pyruvate: step 1/1. Functionally, catalyzes the acyloin condensation reaction between C atoms 2 and 3 of pyruvate and glyceraldehyde 3-phosphate to yield 1-deoxy-D-xylulose-5-phosphate (DXP). In Pseudomonas putida (strain ATCC 700007 / DSM 6899 / JCM 31910 / BCRC 17059 / LMG 24140 / F1), this protein is 1-deoxy-D-xylulose-5-phosphate synthase.